Here is a 169-residue protein sequence, read N- to C-terminus: MDDLPLNVGLPIIGVMLVLIVAILCYLAYHWHDTFKLVRMFLSYRWLIRCCELYGEYERRFADLSSLGLGAVRRESDRRYRFSERPDEILVRWEEVSSQCSYASSRITDRRAGSSSSSSVHVANQRNSVPPPDMAVTAPLTDVDLLKPVTGSATQFTTVAMVHYHQEYT.

A helical transmembrane segment spans residues 8 to 28 (VGLPIIGVMLVLIVAILCYLA). The disordered stretch occupies residues 109–133 (DRRAGSSSSSSVHVANQRNSVPPPD).

As to quaternary structure, interacts with host TNFR1. Interacts with host MRP1. Interacts with host UAF1/WDR48. Interacts with host STING1.

It localises to the host Golgi apparatus membrane. Functionally, plays an important role in the establishment of latent viral infection. Modulates the expression of several host cell surface receptors such as TNFR1, CD36 or the MRP1 transporter during productive infection. For instance, associates with host MRP1 and induces its lysosomal degradation. Plays an inhibitory role in the host cGAS/STING/TBK1 pathway and upstream of IRF3 phosphorylation and NF-kappa-B leading to inhibition of interferon beta production during both lytic and latent infections. Also participates in the establishment of latency by sustaining an innate immune response through phosphorylation and activation of host STAT1. The chain is Protein UL138 (UL138) from Human cytomegalovirus (strain Merlin) (HHV-5).